We begin with the raw amino-acid sequence, 22 residues long: Unknown protein from spot 168 of 2D-PAGE of etiolated coleoptile (22 aa).

The chain is Unknown protein from spot 168 of 2D-PAGE of etiolated coleoptile from Zea mays (Maize).